Reading from the N-terminus, the 760-residue chain is Xaa-Pro dipeptidyl-peptidase (760 aa).

Residues serine 349, aspartate 469, and histidine 499 each act as charge relay system in the active site.

The protein belongs to the peptidase S15 family. As to quaternary structure, homodimer.

The protein localises to the cytoplasm. It catalyses the reaction Hydrolyzes Xaa-Pro-|- bonds to release unblocked, N-terminal dipeptides from substrates including Ala-Pro-|-p-nitroanilide and (sequentially) Tyr-Pro-|-Phe-Pro-|-Gly-Pro-|-Ile.. Removes N-terminal dipeptides sequentially from polypeptides having unsubstituted N-termini provided that the penultimate residue is proline. This Streptococcus pyogenes serotype M18 (strain MGAS8232) protein is Xaa-Pro dipeptidyl-peptidase.